We begin with the raw amino-acid sequence, 182 residues long: Mid1-interacting protein 1 (182 aa).

N-acetylmethionine is present on Met-1. The tract at residues 55 to 75 (VGGSGGCLEERTTPAPSPGSA) is disordered. Residues Ser-71, Ser-74, and Ser-78 each carry the phosphoserine modification.

This sequence belongs to the SPOT14 family. In terms of assembly, homodimer in the absence of THRSP. Heterodimer with THRSP. The homodimer interacts with ACACA and ACACB. Promotes polymerization of Acetyl-CoA carboxylase to form complexes that contain MID1IP1 and ACACA and/or ACACB. Interaction with THRSP interferes with ACACA binding. In terms of tissue distribution, during embryonic development, expressed mainly in the neuroepithelial midline, urogenital apparatus and digits. Detected in adult white fat, liver, heart, brain and kidney. Expressed at very low levels in lactating mammary gland.

It is found in the nucleus. It localises to the cytoplasm. Its subcellular location is the cytoskeleton. In terms of biological role, plays a role in the regulation of lipogenesis in liver. Up-regulates ACACA enzyme activity. Required for efficient lipid biosynthesis, including triacylglycerol, diacylglycerol and phospholipid. Involved in stabilization of microtubules. The polypeptide is Mid1-interacting protein 1 (Mid1ip1) (Mus musculus (Mouse)).